Consider the following 1397-residue polypeptide: Probable cyclin-dependent serine/threonine-protein kinase DDB_G0292550 (1397 aa).

Positions phenylalanine 4–phenylalanine 287 constitute a Protein kinase domain. ATP contacts are provided by residues isoleucine 10–valine 18 and lysine 33. Aspartate 124 serves as the catalytic Proton acceptor. Disordered stretches follow at residues asparagine 412 to asparagine 567, proline 671 to phenylalanine 728, asparagine 763 to asparagine 831, asparagine 845 to histidine 949, asparagine 996 to asparagine 1101, asparagine 1115 to valine 1174, asparagine 1227 to leucine 1324, and lysine 1340 to aspartate 1397. The span at serine 676–glutamine 715 shows a compositional bias: low complexity. Composition is skewed to low complexity over residues asparagine 845–glycine 941, asparagine 1012–asparagine 1021, asparagine 1028–asparagine 1101, and asparagine 1115–asparagine 1155. Polar residues predominate over residues threonine 1156–asparagine 1171. Composition is skewed to low complexity over residues asparagine 1253–serine 1321 and serine 1354–glutamine 1380.

This sequence belongs to the protein kinase superfamily. CMGC Ser/Thr protein kinase family. CDC2/CDKX subfamily.

It carries out the reaction L-seryl-[protein] + ATP = O-phospho-L-seryl-[protein] + ADP + H(+). The catalysed reaction is L-threonyl-[protein] + ATP = O-phospho-L-threonyl-[protein] + ADP + H(+). This is Probable cyclin-dependent serine/threonine-protein kinase DDB_G0292550 from Dictyostelium discoideum (Social amoeba).